The chain runs to 161 residues: Large ribosomal subunit protein uL10 (161 aa).

It belongs to the universal ribosomal protein uL10 family. In terms of assembly, part of the ribosomal stalk of the 50S ribosomal subunit. The N-terminus interacts with L11 and the large rRNA to form the base of the stalk. The C-terminus forms an elongated spine to which L12 dimers bind in a sequential fashion forming a multimeric L10(L12)X complex.

Forms part of the ribosomal stalk, playing a central role in the interaction of the ribosome with GTP-bound translation factors. The chain is Large ribosomal subunit protein uL10 from Buchnera aphidicola subsp. Cinara cedri (strain Cc).